A 354-amino-acid chain; its full sequence is 4-hydroxy-2-oxovalerate aldolase 6 (354 aa).

A Pyruvate carboxyltransferase domain is found at 10–262 (VRIVDTTLRD…ATGLDVMATL (253 aa)). 18 to 19 (RD) contributes to the substrate binding site. Asp19 serves as a coordination point for Mn(2+). His22 serves as the catalytic Proton acceptor. Residues Ser172 and His201 each contribute to the substrate site. The Mn(2+) site is built by His201 and His203. Position 292 (Tyr292) interacts with substrate.

This sequence belongs to the 4-hydroxy-2-oxovalerate aldolase family.

It carries out the reaction (S)-4-hydroxy-2-oxopentanoate = acetaldehyde + pyruvate. This chain is 4-hydroxy-2-oxovalerate aldolase 6, found in Rhodococcus jostii (strain RHA1).